Reading from the N-terminus, the 390-residue chain is MIIVVGIGADGMTGLSEHSRSELRRATVIYGSKRQLALLDDTVTAERWEWPTPMLPAVQGLSPDGADLHVVASGDPLLHGIGSTLIRLFGHDNVTVLPHVSAVTLACARMGWNVYDTEVISLVTAQPHTAVRRGGRAIVLSGDRSTPQALAVLLTEHGRGDSKFSVLEQLGGPAERRRDGTARAWACDPPLDVDELNVIAVRYLPDERTSWAPDEAFAHDGQITKHPIRVLTLAALAPRPGQRLWDVGAGSGAIAVQWCRSWPGCTAVAFERDERRRRNIGFNAAAFGVSVDVRGDAPDAFDDAARPSVIFLGGGVTQPGLLEACLHSLPAGGNLVANAVTVESEAALAHAYSRLGGELRRFQHYLGEPLGGFTGWRPQLPVTQWSVTKR.

The protein belongs to the precorrin methyltransferase family.

It carries out the reaction precorrin-6B + 2 S-adenosyl-L-methionine = precorrin-8X + 2 S-adenosyl-L-homocysteine + CO2 + 3 H(+). It participates in cofactor biosynthesis; adenosylcobalamin biosynthesis; cob(II)yrinate a,c-diamide from precorrin-2 (aerobic route): step 7/10. Functionally, catalyzes the methylation of both C-5 and C-15 in precorrin-6Y to form precorrin-8X. The polypeptide is Precorrin-6Y C(5,15)-methyltransferase [decarboxylating] (cobL) (Mycobacterium tuberculosis (strain CDC 1551 / Oshkosh)).